A 267-amino-acid chain; its full sequence is GTP cyclohydrolase FolE2 (267 aa).

This sequence belongs to the GTP cyclohydrolase IV family.

It carries out the reaction GTP + H2O = 7,8-dihydroneopterin 3'-triphosphate + formate + H(+). It functions in the pathway cofactor biosynthesis; 7,8-dihydroneopterin triphosphate biosynthesis; 7,8-dihydroneopterin triphosphate from GTP: step 1/1. Converts GTP to 7,8-dihydroneopterin triphosphate. The chain is GTP cyclohydrolase FolE2 from Citrifermentans bemidjiense (strain ATCC BAA-1014 / DSM 16622 / JCM 12645 / Bem) (Geobacter bemidjiensis).